A 415-amino-acid chain; its full sequence is Probable cytosolic iron-sulfur protein assembly protein 1 (415 aa).

A WD 1 repeat occupies 9–48; it reads AHDDKVWSLSSHPTLPLLATASTDKCSNIYRLSCSNASSS. Residues 45-70 form a disordered region; the sequence is ASSSSSSSSPPSPPSPPSSSSPRRNF. The span at 54-63 shows a compositional bias: pro residues; sequence PPSPPSPPSS. WD repeat units lie at residues 79–131, 160–200, 207–246, 253–300, 335–374, and 380–415; these read THRR…DDNT, GHEN…EEFE, DHTQ…DEWS, GHEG…GFNG, IHTH…WEVE, and AHGV…IWEV.

The protein belongs to the WD repeat CIA1 family. Interacts with NAR1.

The protein resides in the cytoplasm. The protein localises to the nucleus. Essential component of the cytosolic iron-sulfur (Fe/S) protein assembly machinery. Required for the maturation of extramitochondrial Fe/S proteins. The polypeptide is Probable cytosolic iron-sulfur protein assembly protein 1 (Lodderomyces elongisporus (strain ATCC 11503 / CBS 2605 / JCM 1781 / NBRC 1676 / NRRL YB-4239) (Yeast)).